The following is a 184-amino-acid chain: Protein Syd (184 aa).

Belongs to the Syd family.

It is found in the cell inner membrane. Interacts with the SecY protein in vivo. May bind preferentially to an uncomplexed state of SecY, thus functioning either as a chelating agent for excess SecY in the cell or as a regulatory factor that negatively controls the translocase function. In Edwardsiella ictaluri (strain 93-146), this protein is Protein Syd.